Reading from the N-terminus, the 707-residue chain is E3 ubiquitin-protein ligase Praja-2 (707 aa).

Basic and acidic residues predominate over residues 1-10 (MSQYTEKEPS). 3 disordered regions span residues 1–23 (MSQY…AWPR), 75–120 (NTAG…PSVA), and 242–290 (AGDA…CVPG). Serine 2 is modified (N-acetylserine). Residues 109-119 (LNQSTESNPSV) are compositionally biased toward polar residues. A compositionally biased stretch (basic and acidic residues) spans 246–276 (EAVHQDGQEFQRSSEDGIVRKRRQDDTDQGR). Phosphoserine occurs at positions 306 and 320. Position 339 is a phosphoserine; by PKA (serine 339). Disordered stretches follow at residues 380-403 (VTPR…GRQE) and 424-493 (EDSS…QTSL). Over residues 381-391 (TPREAERHRAT) the composition is skewed to basic and acidic residues. Residue serine 430 is modified to Phosphoserine. Residues 465 to 481 (NEPELQSDSSGPEEENQ) are compositionally biased toward acidic residues. The span at 482–491 (ELSLQEGEQT) shows a compositional bias: polar residues. The interaction with PRKAR1A, PRKAR2A and PRKAR2B stretch occupies residues 530–707 (DGNNNLEDDS…PANDNAEEAP (178 aa)). The interval 549–569 (WSLFDGFADGLGVAEAISYVD) is mediates interaction with TBC1D31. The RING-type; atypical zinc-finger motif lies at 633-674 (CPICCSEYIKDDIATELPCHHFFHKPCVSIWLQKSGTCPVCR). The interval 686-707 (AAASSEPDLDASPANDNAEEAP) is disordered.

As to quaternary structure, binds ubiquitin-conjugating enzymes (E2s). In vitro, interacts with the ubiquitin-conjugating enzyme, UBE2D2. The phosphorylated form interacts with PRKAR1A, PRKAR2A and PRKAR2B. Binds the catalytic subunits of cAMP-dependent protein kinase. Interacts with MFHAS1. Interacts with TBC1D31; the interaction is direct and recruits PJA2 to centrosomes. As to expression, highly expressed in the brain, in nerve cells but not in glial cells. Abundantly expressed in pyramidal neurons and in the CA3 region of apical dendrites. Colocalizes with PRKAR2B in dentate granule cells and at postsynaptic sites of primary hippocampal neurons.

It localises to the cytoplasm. The protein localises to the cell membrane. The protein resides in the endoplasmic reticulum membrane. Its subcellular location is the golgi apparatus membrane. It is found in the synapse. It localises to the postsynaptic density. The protein localises to the cytoskeleton. The protein resides in the microtubule organizing center. Its subcellular location is the centrosome. The catalysed reaction is S-ubiquitinyl-[E2 ubiquitin-conjugating enzyme]-L-cysteine + [acceptor protein]-L-lysine = [E2 ubiquitin-conjugating enzyme]-L-cysteine + N(6)-ubiquitinyl-[acceptor protein]-L-lysine.. It participates in protein modification; protein ubiquitination. Functionally, has E2-dependent E3 ubiquitin-protein ligase activity. Responsible for ubiquitination of cAMP-dependent protein kinase type I and type II-alpha/beta regulatory subunits and for targeting them for proteasomal degradation. Essential for PKA-mediated long-term memory processes. Through the ubiquitination of MFHAS1, positively regulates the TLR2 signaling pathway that leads to the activation of the downstream p38 and JNK MAP kinases and promotes the polarization of macrophages toward the pro-inflammatory M1 phenotype. Plays a role in ciliogenesis by ubiquitinating OFD1. This is E3 ubiquitin-protein ligase Praja-2 (Pja2) from Rattus norvegicus (Rat).